The sequence spans 816 residues: tRNA(Met) cytidine acetyltransferase TmcA (816 aa).

ATP is bound by residues Gln-265 and Arg-439. In terms of domain architecture, N-acetyltransferase spans 469 to 664 (ELIRKMEVYL…YTAIVIKPIS (196 aa)). Residues 589–591 (IAT), Glu-629, and Arg-636 each bind acetyl-CoA.

This sequence belongs to the TmcA family.

It is found in the cytoplasm. The enzyme catalyses cytidine(34) in elongator tRNA(Met) + acetyl-CoA + ATP + H2O = N(4)-acetylcytidine(34) in elongator tRNA(Met) + ADP + phosphate + CoA + H(+). It carries out the reaction a cytidine in RNA + acetyl-CoA + ATP + H2O = an N(4)-acetylcytidine in RNA + ADP + phosphate + CoA + H(+). It catalyses the reaction a cytidine in tRNA + acetyl-CoA + ATP + H2O = an N(4)-acetylcytidine in tRNA + ADP + phosphate + CoA + H(+). The catalysed reaction is a cytidine in mRNA + acetyl-CoA + ATP + H2O = an N(4)-acetylcytidine in mRNA + ADP + phosphate + CoA + H(+). Catalyzes the formation of N(4)-acetylcytidine (ac(4)C) at the wobble position of tRNA(Met), by using acetyl-CoA as an acetyl donor and ATP (or GTP). Functionally, catalyzes the formation of 233 N(4)-acetylcytidine (ac(4)C) sites in RNA, on the middle C of a CCG motif. Modifications are found in rRNA, ncRNA, mRNA and tRNA. More acetylation is observed at 85 than at 65 or 75 degrees Celsius. In Pyrococcus furiosus (strain ATCC 43587 / DSM 3638 / JCM 8422 / Vc1), this protein is tRNA(Met) cytidine acetyltransferase TmcA.